A 392-amino-acid chain; its full sequence is Stilbene synthase 5 (392 aa).

55-58 contributes to the substrate binding site; sequence KFNR. Residue C164 is part of the active site. Residues L267 and 305-307 contribute to the substrate site; that span reads GGP.

The protein belongs to the thiolase-like superfamily. Chalcone/stilbene synthases family. Homodimer.

The protein localises to the cytoplasm. The enzyme catalyses 4-coumaroyl-CoA + 3 malonyl-CoA + 3 H(+) = trans-resveratrol + 4 CO2 + 4 CoA. Its pathway is phytoalexin biosynthesis; 3,4',5-trihydroxystilbene biosynthesis; 3,4',5-trihydroxystilbene from trans-4-coumarate: step 2/2. Its function is as follows. Mediates resistance to pathogens which are sensitive to stilbenes. The polypeptide is Stilbene synthase 5 (Vitis vinifera (Grape)).